We begin with the raw amino-acid sequence, 243 residues long: Orotidine 5'-phosphate decarboxylase (243 aa).

Residues aspartate 19, lysine 41, 69–78 (DLKFFDIPAT), threonine 124, arginine 185, glutamine 194, glycine 214, and arginine 215 contribute to the substrate site. Lysine 71 serves as the catalytic Proton donor.

It belongs to the OMP decarboxylase family. Type 1 subfamily. In terms of assembly, homodimer.

The catalysed reaction is orotidine 5'-phosphate + H(+) = UMP + CO2. It functions in the pathway pyrimidine metabolism; UMP biosynthesis via de novo pathway; UMP from orotate: step 2/2. Its function is as follows. Catalyzes the decarboxylation of orotidine 5'-monophosphate (OMP) to uridine 5'-monophosphate (UMP). This Xanthomonas euvesicatoria pv. vesicatoria (strain 85-10) (Xanthomonas campestris pv. vesicatoria) protein is Orotidine 5'-phosphate decarboxylase.